We begin with the raw amino-acid sequence, 299 residues long: 4-diphosphocytidyl-2-C-methyl-D-erythritol kinase (299 aa).

Lys11 is a catalytic residue. ATP is bound at residue Pro94–Ser104. The active site involves Asp136.

The protein belongs to the GHMP kinase family. IspE subfamily.

The enzyme catalyses 4-CDP-2-C-methyl-D-erythritol + ATP = 4-CDP-2-C-methyl-D-erythritol 2-phosphate + ADP + H(+). Its pathway is isoprenoid biosynthesis; isopentenyl diphosphate biosynthesis via DXP pathway; isopentenyl diphosphate from 1-deoxy-D-xylulose 5-phosphate: step 3/6. In terms of biological role, catalyzes the phosphorylation of the position 2 hydroxy group of 4-diphosphocytidyl-2C-methyl-D-erythritol. The polypeptide is 4-diphosphocytidyl-2-C-methyl-D-erythritol kinase (Bordetella parapertussis (strain 12822 / ATCC BAA-587 / NCTC 13253)).